A 352-amino-acid chain; its full sequence is Large ribosomal subunit protein uL5m (352 aa).

The interval 28–109 (STQTGAGAAA…HPIQSPPSSD (82 aa)) is disordered. The segment covering 63 to 80 (EEDKKEFRPWKRAADRKA) has biased composition (basic and acidic residues).

The protein belongs to the universal ribosomal protein uL5 family. Component of the mitochondrial large ribosomal subunit (mt-LSU). Mature N.crassa 74S mitochondrial ribosomes consist of a small (37S) and a large (54S) subunit. The 37S small subunit contains a 16S ribosomal RNA (16S mt-rRNA) and 32 different proteins. The 54S large subunit contains a 23S rRNA (23S mt-rRNA) and 42 different proteins. Unlike bacterial L5, uL5m does not bind zinc.

It is found in the mitochondrion. Functionally, component of the mitochondrial ribosome (mitoribosome), a dedicated translation machinery responsible for the synthesis of mitochondrial genome-encoded proteins, including at least some of the essential transmembrane subunits of the mitochondrial respiratory chain. The mitoribosomes are attached to the mitochondrial inner membrane and translation products are cotranslationally integrated into the membrane. The protein is Large ribosomal subunit protein uL5m (mrpl7) of Neurospora crassa (strain ATCC 24698 / 74-OR23-1A / CBS 708.71 / DSM 1257 / FGSC 987).